The following is a 155-amino-acid chain: SsrA-binding protein (155 aa).

This sequence belongs to the SmpB family.

The protein resides in the cytoplasm. Its function is as follows. Required for rescue of stalled ribosomes mediated by trans-translation. Binds to transfer-messenger RNA (tmRNA), required for stable association of tmRNA with ribosomes. tmRNA and SmpB together mimic tRNA shape, replacing the anticodon stem-loop with SmpB. tmRNA is encoded by the ssrA gene; the 2 termini fold to resemble tRNA(Ala) and it encodes a 'tag peptide', a short internal open reading frame. During trans-translation Ala-aminoacylated tmRNA acts like a tRNA, entering the A-site of stalled ribosomes, displacing the stalled mRNA. The ribosome then switches to translate the ORF on the tmRNA; the nascent peptide is terminated with the 'tag peptide' encoded by the tmRNA and targeted for degradation. The ribosome is freed to recommence translation, which seems to be the essential function of trans-translation. In Ligilactobacillus salivarius (strain UCC118) (Lactobacillus salivarius), this protein is SsrA-binding protein.